A 624-amino-acid polypeptide reads, in one-letter code: Kelch-like ECH-associated protein 1 (624 aa).

A disordered region spans residues 1–27; the sequence is MQPEPRPSGAGAHTQFLPLRSQRPEGA. Cys38 bears the S-(2-succinyl)cysteine mark. In terms of domain architecture, BTB spans 77 to 149; that stretch reads CDVTLQVKYE…AYTASISMGE (73 aa). Arg135 participates in a covalent cross-link: N5-[4-(S-L-cysteinyl)-5-methyl-1H-imidazol-2-yl]-L-ornithine (Arg-Cys) (interchain with C-151 in KEAP1). S-(2-succinyl)cysteine occurs at positions 151 and 241. Cys151 is subject to S-(2,3-dicarboxypropyl)cysteine; alternate. An S-nitrosocysteine; alternate modification is found at Cys151. Cys151 participates in a covalent cross-link: N5-[4-(S-L-cysteinyl)-5-methyl-1H-imidazol-2-yl]-L-ornithine (Cys-Arg) (interchain with R-135 in KEAP1). The 103-residue stretch at 184-286 folds into the BACK domain; that stretch reads AIGIANFAEQ…TPHFLQMQLQ (103 aa). S-(2,3-dicarboxypropyl)cysteine is present on residues Cys257 and Cys273. Residues Cys288 and Cys319 each carry the S-(2-succinyl)cysteine modification. S-(2,3-dicarboxypropyl)cysteine; alternate is present on Cys288. 6 Kelch repeats span residues 327–372, 373–423, 424–470, 471–517, 519–564, and 565–611; these read LIYT…VVGG, LLYA…VIDG, HIYA…VLNR, LLYA…VLHN, IYAA…VHQG, and RIYV…VTME. Position 434 is an S-cGMP-cysteine (Cys434). Cys613 bears the S-(2-succinyl)cysteine mark.

Belongs to the KEAP1 family. Component of the BCR(KEAP1) E3 ubiquitin ligase complex, at least composed of 2 molecules of CUL3, 2 molecules of KEAP1, and RBX1. Interacts with NFE2L2/NRF2; the interaction is direct. Forms a ternary complex with NFE2L2/NRF2 and PGAM5. Interacts with (phosphorylated) SQSTM1/p62; the interaction is direct and inactivates the BCR(KEAP1) complex by sequestering it in inclusion bodies, promoting its degradation. Interacts with NFE2L1. Interacts with BPTF and PTMA. Interacts with MAP1LC3B. Interacts indirectly with ENC1. Interacts with SESN1 and SESN2. Interacts with HSP90AA1 and HSP90AB1. Interacts with PGCKA1; this interaction prevents the ubiquitination of KEAP1 by TRIM25, thus protecting KEAP1 protein from degradation. Non-enzymatic covalent modifications of reactive cysteines by electrophile metabolites inactivate the BCR(KEAP1) complex. Accumulation of fumarate promotes the formation of cysteine S-succination (S-(2-succinyl)cysteine), leading to inactivate the BCR(KEAP1) complex and promote NFE2L2/NRF2 nuclear accumulation and activation. Nitric oxide-dependent 8-Nitro-cGMP formation promotes cysteine guanylation (S-cGMP-cysteine), leading to NFE2L2/NRF2 nuclear accumulation and activation. Itaconate, an anti-inflammatory metabolite generated in response to lipopolysaccharide, alkylates cysteines, activating NFE2L2/NRF2. Methylglyoxal, a reactive metabolite that accumulates when the glycolytic enzyme PGK1 is inhibited, promotes formation of a methylimidazole cross-link between proximal Cys-151 and Arg-135 on another KEAP1 molecule, resulting in an inactive dimer that inactivates the BCR(KEAP1) complex. Post-translationally, degraded via a proteasomal-independent process during selective autophagy: interaction with phosphorylated SQSTM1/p62 sequesters KEAP1 in inclusion bodies, leading to its degradation. In terms of processing, auto-ubiquitinated by the BCR(KEAP1) complex. Quinone-induced oxidative stress, but not sulforaphane, increases its ubiquitination. Ubiquitination and subsequent degradation is most pronounced following prolonged exposure of cells to oxidative stress, particularly in glutathione-deficient cells that are highly susceptible to oxidative stress. Deubiquitinated by USP25; leading to stabilization. Ubiquitinated by TRIM25; leading to degradation upon ER stress.

It localises to the cytoplasm. It is found in the nucleus. Its pathway is protein modification; protein ubiquitination. With respect to regulation, ubiquitin ligase activity of the BCR(KEAP1) complex is inhibited by oxidative stress and electrophile metabolites such as sulforaphane. Electrophile metabolites react with reactive cysteine residues in KEAP1 and trigger non-enzymatic covalent modifications of these cysteine residues, leading to inactivate the ubiquitin ligase activity of the BCR(KEAP1) complex. Selective autophagy also inactivates the BCR(KEAP1) complex via interaction between KEAP1 and SQSTM1/p62, which sequesters the complex in inclusion bodies and promotes its degradation. Substrate-specific adapter of a BCR (BTB-CUL3-RBX1) E3 ubiquitin ligase complex that regulates the response to oxidative stress by targeting NFE2L2/NRF2 for ubiquitination. KEAP1 acts as a key sensor of oxidative and electrophilic stress: in normal conditions, the BCR(KEAP1) complex mediates ubiquitination and degradation of NFE2L2/NRF2, a transcription factor regulating expression of many cytoprotective genes. In response to oxidative stress, different electrophile metabolites trigger non-enzymatic covalent modifications of highly reactive cysteine residues in KEAP1, leading to inactivate the ubiquitin ligase activity of the BCR(KEAP1) complex, promoting NFE2L2/NRF2 nuclear accumulation and expression of phase II detoxifying enzymes. In response to selective autophagy, KEAP1 is sequestered in inclusion bodies following its interaction with SQSTM1/p62, leading to inactivation of the BCR(KEAP1) complex and activation of NFE2L2/NRF2. The BCR(KEAP1) complex also mediates ubiquitination of SQSTM1/p62, increasing SQSTM1/p62 sequestering activity and degradation. The BCR(KEAP1) complex also targets BPTF and PGAM5 for ubiquitination and degradation by the proteasome. The polypeptide is Kelch-like ECH-associated protein 1 (Sus scrofa (Pig)).